The following is a 465-amino-acid chain: Probable Xaa-Pro aminopeptidase pepP (465 aa).

Asp-263, Asp-274, Glu-397, and Glu-437 together coordinate Mn(2+).

Belongs to the peptidase M24B family. The cofactor is Mn(2+).

It catalyses the reaction Release of any N-terminal amino acid, including proline, that is linked to proline, even from a dipeptide or tripeptide.. Catalyzes the removal of a penultimate prolyl residue from the N-termini of peptides. The sequence is that of Probable Xaa-Pro aminopeptidase pepP (pepP) from Penicillium rubens (strain ATCC 28089 / DSM 1075 / NRRL 1951 / Wisconsin 54-1255) (Penicillium chrysogenum).